A 309-amino-acid polypeptide reads, in one-letter code: Aspartate carbamoyltransferase catalytic subunit (309 aa).

The carbamoyl phosphate site is built by Arg57 and Thr58. Lys86 is a binding site for L-aspartate. Carbamoyl phosphate-binding residues include Arg107, His135, and Gln138. Residues Arg168 and Arg229 each coordinate L-aspartate. Positions 269 and 270 each coordinate carbamoyl phosphate.

Belongs to the aspartate/ornithine carbamoyltransferase superfamily. ATCase family. As to quaternary structure, heterooligomer of catalytic and regulatory chains.

It carries out the reaction carbamoyl phosphate + L-aspartate = N-carbamoyl-L-aspartate + phosphate + H(+). It functions in the pathway pyrimidine metabolism; UMP biosynthesis via de novo pathway; (S)-dihydroorotate from bicarbonate: step 2/3. Its function is as follows. Catalyzes the condensation of carbamoyl phosphate and aspartate to form carbamoyl aspartate and inorganic phosphate, the committed step in the de novo pyrimidine nucleotide biosynthesis pathway. The chain is Aspartate carbamoyltransferase catalytic subunit from Methanopyrus kandleri (strain AV19 / DSM 6324 / JCM 9639 / NBRC 100938).